The primary structure comprises 185 residues: Ribosome-recycling factor (185 aa).

Positions 142-164 are enriched in basic and acidic residues; sequence IKKDGDAGEDDVTRAEKDLDKST. Positions 142–173 are disordered; it reads IKKDGDAGEDDVTRAEKDLDKSTHQYTSQVDD.

It belongs to the RRF family.

Its subcellular location is the cytoplasm. Functionally, responsible for the release of ribosomes from messenger RNA at the termination of protein biosynthesis. May increase the efficiency of translation by recycling ribosomes from one round of translation to another. This is Ribosome-recycling factor from Mycolicibacterium gilvum (strain PYR-GCK) (Mycobacterium gilvum (strain PYR-GCK)).